The chain runs to 197 residues: Peptidyl-tRNA hydrolase (197 aa).

Tyr17 is a tRNA binding site. His22 functions as the Proton acceptor in the catalytic mechanism. Residues Phe68, Asn70, and Asn116 each contribute to the tRNA site.

This sequence belongs to the PTH family. As to quaternary structure, monomer.

The protein resides in the cytoplasm. It catalyses the reaction an N-acyl-L-alpha-aminoacyl-tRNA + H2O = an N-acyl-L-amino acid + a tRNA + H(+). In terms of biological role, hydrolyzes ribosome-free peptidyl-tRNAs (with 1 or more amino acids incorporated), which drop off the ribosome during protein synthesis, or as a result of ribosome stalling. Its function is as follows. Catalyzes the release of premature peptidyl moieties from peptidyl-tRNA molecules trapped in stalled 50S ribosomal subunits, and thus maintains levels of free tRNAs and 50S ribosomes. The protein is Peptidyl-tRNA hydrolase of Yersinia enterocolitica serotype O:8 / biotype 1B (strain NCTC 13174 / 8081).